Here is a 146-residue protein sequence, read N- to C-terminus: Large ribosomal subunit protein bL9 (146 aa).

This sequence belongs to the bacterial ribosomal protein bL9 family. As to quaternary structure, part of the 50S ribosomal subunit. Contacts protein L31.

Binds to the 23S rRNA and protein L31. This is Large ribosomal subunit protein bL9 (rplI) from Deinococcus radiodurans (strain ATCC 13939 / DSM 20539 / JCM 16871 / CCUG 27074 / LMG 4051 / NBRC 15346 / NCIMB 9279 / VKM B-1422 / R1).